The sequence spans 268 residues: Glutamate 5-kinase (268 aa).

Lysine 15 lines the ATP pocket. Residues serine 55, aspartate 142, and asparagine 158 each coordinate substrate. 178–179 contributes to the ATP binding site; that stretch reads SD.

This sequence belongs to the glutamate 5-kinase family.

It is found in the cytoplasm. It carries out the reaction L-glutamate + ATP = L-glutamyl 5-phosphate + ADP. It functions in the pathway amino-acid biosynthesis; L-proline biosynthesis; L-glutamate 5-semialdehyde from L-glutamate: step 1/2. In terms of biological role, catalyzes the transfer of a phosphate group to glutamate to form L-glutamate 5-phosphate. This Oenococcus oeni (strain ATCC BAA-331 / PSU-1) protein is Glutamate 5-kinase.